Consider the following 871-residue polypeptide: Alanine--tRNA ligase (871 aa).

Zn(2+)-binding residues include His563, His567, Cys665, and His669.

It belongs to the class-II aminoacyl-tRNA synthetase family. It depends on Zn(2+) as a cofactor.

It localises to the cytoplasm. It carries out the reaction tRNA(Ala) + L-alanine + ATP = L-alanyl-tRNA(Ala) + AMP + diphosphate. Its function is as follows. Catalyzes the attachment of alanine to tRNA(Ala) in a two-step reaction: alanine is first activated by ATP to form Ala-AMP and then transferred to the acceptor end of tRNA(Ala). Also edits incorrectly charged Ser-tRNA(Ala) and Gly-tRNA(Ala) via its editing domain. The chain is Alanine--tRNA ligase from Christiangramia forsetii (strain DSM 17595 / CGMCC 1.15422 / KT0803) (Gramella forsetii).